A 231-amino-acid polypeptide reads, in one-letter code: 2-C-methyl-D-erythritol 4-phosphate cytidylyltransferase (231 aa).

This sequence belongs to the IspD/TarI cytidylyltransferase family. IspD subfamily.

It catalyses the reaction 2-C-methyl-D-erythritol 4-phosphate + CTP + H(+) = 4-CDP-2-C-methyl-D-erythritol + diphosphate. It participates in isoprenoid biosynthesis; isopentenyl diphosphate biosynthesis via DXP pathway; isopentenyl diphosphate from 1-deoxy-D-xylulose 5-phosphate: step 2/6. In terms of biological role, catalyzes the formation of 4-diphosphocytidyl-2-C-methyl-D-erythritol from CTP and 2-C-methyl-D-erythritol 4-phosphate (MEP). In Dictyoglomus thermophilum (strain ATCC 35947 / DSM 3960 / H-6-12), this protein is 2-C-methyl-D-erythritol 4-phosphate cytidylyltransferase.